The following is a 134-amino-acid chain: Fluoride-specific ion channel FluC 2 (134 aa).

4 helical membrane passes run 1 to 21, 28 to 48, 68 to 88, and 92 to 112; these read MNYFAVALGGFFGAIAREITG, IFPVGTLAINLSGSFLLLFFM, GFLGAYTTFSTMTKEIYLLLF, and LLIGFAYLFLSLSGGFLSGIL. Na(+) is bound by residues Gly-71 and Thr-74.

It belongs to the fluoride channel Fluc/FEX (TC 1.A.43) family.

The protein localises to the cell membrane. It catalyses the reaction fluoride(in) = fluoride(out). Its activity is regulated as follows. Na(+) is not transported, but it plays an essential structural role and its presence is essential for fluoride channel function. Its function is as follows. Fluoride-specific ion channel. Important for reducing fluoride concentration in the cell, thus reducing its toxicity. This Carboxydothermus hydrogenoformans (strain ATCC BAA-161 / DSM 6008 / Z-2901) protein is Fluoride-specific ion channel FluC 2.